A 741-amino-acid chain; its full sequence is Zinc finger and BTB domain-containing protein 20 (741 aa).

Basic and acidic residues predominate over residues Met-1–Glu-17. Positions Met-1 to Ser-28 are disordered. In terms of domain architecture, BTB spans Cys-104–Gln-167. The tract at residues Gly-203–His-235 is disordered. Polar residues predominate over residues Asp-206–His-235. Thr-211 is modified (phosphothreonine). Lys-330 participates in a covalent cross-link: Glycyl lysine isopeptide (Lys-Gly) (interchain with G-Cter in SUMO1); alternate. A Glycyl lysine isopeptide (Lys-Gly) (interchain with G-Cter in SUMO2); alternate cross-link involves residue Lys-330. A disordered region spans residues Arg-350–Glu-440. Ser-353 carries the post-translational modification Phosphoserine. Residues Glu-354 to Glu-367 show a composition bias toward acidic residues. The residue at position 357 (Thr-357) is a Phosphothreonine. A Glycyl lysine isopeptide (Lys-Gly) (interchain with G-Cter in SUMO2) cross-link involves residue Lys-371. The span at Ala-404–Pro-423 shows a compositional bias: low complexity. 4 consecutive C2H2-type zinc fingers follow at residues Tyr-578 to His-600, His-606 to His-628, Tyr-634 to His-656, and Tyr-662 to His-684. 2 positions are modified to phosphothreonine: Thr-690 and Thr-695. The segment at Tyr-715–His-737 adopts a C2H2-type 5 zinc-finger fold. A Glycyl lysine isopeptide (Lys-Gly) (interchain with G-Cter in SUMO2) cross-link involves residue Lys-723.

In terms of assembly, can homodimerize. Binds to DNA. In terms of processing, sumoylated with SUMO1. Specifically expressed in early hippocampal neurons, cerebellar granule cells and gliogenic progenitors as well as in differentiated glia. Expressed in adult and aged myogenic satellite cells.

The protein localises to the nucleus. Its function is as follows. May be a transcription factor that may be involved in hematopoiesis, oncogenesis, and immune responses. Plays a role in postnatal myogenesis, may be involved in the regulation of satellite cells self-renewal. In Mus musculus (Mouse), this protein is Zinc finger and BTB domain-containing protein 20 (Zbtb20).